The sequence spans 173 residues: Small ribosomal subunit protein uS5 (173 aa).

The S5 DRBM domain occupies 17 to 80; the sequence is WQERVIQIRR…ADGKKQLIDV (64 aa).

The protein belongs to the universal ribosomal protein uS5 family. As to quaternary structure, part of the 30S ribosomal subunit. Contacts proteins S4 and S8.

Functionally, with S4 and S12 plays an important role in translational accuracy. In terms of biological role, located at the back of the 30S subunit body where it stabilizes the conformation of the head with respect to the body. The chain is Small ribosomal subunit protein uS5 from Crocosphaera subtropica (strain ATCC 51142 / BH68) (Cyanothece sp. (strain ATCC 51142)).